The chain runs to 949 residues: Protocadherin alpha-11 (949 aa).

The N-terminal stretch at 1-29 (MFGFQRRGLGTPRLQLWLLLLEFWEVGSG) is a signal peptide. Cadherin domains follow at residues 30-133 (QLHY…PPVF), 157-242 (ASDA…DPDF), 243-349 (DKSE…SPEV), 350-454 (AVTS…APAF), 455-564 (AQPE…APAL), and 580-677 (VPRS…APKA). The Extracellular segment spans residues 30-696 (QLHYSVSEEA…SPEAALVDVN (667 aa)). N-linked (GlcNAc...) asparagine glycosylation is found at Asn265 and Asn304. N-linked (GlcNAc...) asparagine glycosylation is present at Asn547. Residues 697-717 (VYLIIAICVVSSLLVLTLLLY) form a helical membrane-spanning segment. At 718 to 949 (TALWCSATPT…GNSTTDNSDQ (232 aa)) the chain is on the cytoplasmic side. PXXP repeat units lie at residues 733–736 (PGKP) and 773–776 (PSLP). Residues 733-893 (PGKPTLVCSR…PDKFIIPGSP (161 aa)) are 6 X 4 AA repeats of P-X-X-P. 3 disordered regions span residues 753 to 807 (RRQR…DWRY), 826 to 858 (ILRAGPGGPDQQWPTVSSATPEPEAGEVSPPVG), and 870 to 889 (YGPGNPKQSGPGELPDKFII). Residues 780-789 (NKEEEGERQE) are compositionally biased toward basic and acidic residues. PXXP repeat units lie at residues 795 to 798 (PGQP), 831 to 834 (PGGP), 872 to 875 (PGNP), and 890 to 893 (PGSP). The segment at 900 to 949 (QEPANSQIDKSDFITFGKKEETKKKKKKKKGNKTQEKKEKGNSTTDNSDQ) is disordered. Over residues 908 to 922 (DKSDFITFGKKEETK) the composition is skewed to basic and acidic residues.

The protein localises to the cell membrane. Functionally, potential calcium-dependent cell-adhesion protein. May be involved in the establishment and maintenance of specific neuronal connections in the brain. This is Protocadherin alpha-11 (PCDHA11) from Pan troglodytes (Chimpanzee).